An 852-amino-acid chain; its full sequence is MTGASRRSARGRIKSSSLSPGSDEGSAYPPSIRRGKGKELVSIGAFKTNLKILVGLIILGIIVIYFVINRLVRHGLLFDESQKPRVITPFPAPKVMDLSMFQGEHKESLYWGTYRPHVYFGVRARTPLSLVAGLMWLGVKDEMYVMRHFCENSDDLSTFGWREHNGRDYGRQELVENDMVIETSFVKSKGDGLGYGGDWAVRIDVKNKGLNDDVKRSAHLFFYLADEGGNVLNLGQDGLDFQGSSLLVSGSREDVGDWQIHLKSQNQLETHYSGFKTPHIYNLSDLVQQNLALQARKFGRLQLSDTSEDSSNIYIFQISGRLPFTIDIPFISGIKGESSNVEKRLTSLTGLPLSDLLKKKHQEFDAKFNECFKLSEKHDSETLGVGRTAIANMLGGIGYFYGQSKIYVPKSTQPGSRDNFLLYWPAELYTAVPSRPFFPRGFLWDEGFHQLLIWRWDIRITLDIVGHWLDLLNIDGWIPREQILGAEALSKVPEEFVVQYPSNGNPPTLFLVIRDLIDAIRMEKFVASEKDEVLSFLERASVRLDAWFQWFNTSQKGKEIGSYFWHGRDNTTTQELNPKTLSSGLDDYPRASHPSEDERHVDLRCWMYLAADCMHSITELLGKEDKLSKENYNSTVKLLSNFNLLNQMHYDSDYGAYFDFGNHTEKVKLIWKEVIQENGQLSRQLVRKTFGKPKLKLVPHLGYVSFFPFMSRIIPPDSPILEKQLDLISNRSILWSDYGLVSLAKTSSMYMKRNTEHDAPYWRGPIWMNMNYMILSSLYHYSIVDGPYREKSKAIYTELRSNLIRNVVRNYYETGYIWEQYDQVKGTGKGTRLFTGWSALTLLIMSEDYPIF.

Residues 1–31 (MTGASRRSARGRIKSSSLSPGSDEGSAYPPS) form a disordered region. Topologically, residues 1-51 (MTGASRRSARGRIKSSSLSPGSDEGSAYPPSIRRGKGKELVSIGAFKTNLK) are cytoplasmic. Positions 6-12 (RRSARGR) match the Endoplasmic reticulum targeting motif. A compositionally biased stretch (low complexity) spans 15-26 (SSSLSPGSDEGS). Residues 52–72 (ILVGLIILGIIVIYFVINRLV) form a helical; Signal-anchor for type II membrane protein membrane-spanning segment. Residues 73–852 (RHGLLFDESQ…LIMSEDYPIF (780 aa)) are Lumenal-facing. Residues 91 to 150 (PAPKVMDLSMFQGEHKESLYWGTYRPHVYFGVRARTPLSLVAGLMWLGVKDEMYVMRHFC) form a required for endoplasmic reticulum targeting region. 3 N-linked (GlcNAc...) asparagine glycosylation sites follow: Asn282, Asn552, and Asn570. The span at 574–583 (QELNPKTLSS) shows a compositional bias: polar residues. Positions 574–593 (QELNPKTLSSGLDDYPRASH) are disordered. The active-site Proton donor is Asp586. N-linked (GlcNAc...) asparagine glycans are attached at residues Asn633, Asn662, and Asn730. Glu819 serves as the catalytic Proton acceptor.

This sequence belongs to the glycosyl hydrolase 63 family. As to expression, constitutively expressed in roots, stems, leaves, flowers and siliques.

The protein localises to the endoplasmic reticulum membrane. It carries out the reaction N(4)-(alpha-D-Glc-(1-&gt;2)-alpha-D-Glc-(1-&gt;3)-alpha-D-Glc-(1-&gt;3)-alpha-D-Man-(1-&gt;2)-alpha-D-Man-(1-&gt;2)-alpha-D-Man-(1-&gt;3)-[alpha-D-Man-(1-&gt;2)-alpha-D-Man-(1-&gt;3)-[alpha-D-Man-(1-&gt;2)-alpha-D-Man-(1-&gt;6)]-alpha-D-Man-(1-&gt;6)]-beta-D-Man-(1-&gt;4)-beta-D-GlcNAc-(1-&gt;4)-beta-D-GlcNAc)-L-asparaginyl-[protein] + H2O = N(4)-(alpha-D-Glc-(1-&gt;3)-alpha-D-Glc-(1-&gt;3)-alpha-D-Man-(1-&gt;2)-alpha-D-Man-(1-&gt;2)-alpha-D-Man-(1-&gt;3)-[alpha-D-Man-(1-&gt;2)-alpha-D-Man-(1-&gt;3)-[alpha-D-Man-(1-&gt;2)-alpha-D-Man-(1-&gt;6)]-alpha-D-Man-(1-&gt;6)]-beta-D-Man-(1-&gt;4)-beta-D-GlcNAc-(1-&gt;4)-beta-D-GlcNAc)-L-asparaginyl-[protein] + beta-D-glucose. Its pathway is glycan metabolism; N-glycan degradation. Cleaves the distal alpha 1,2-linked glucose residue from the Glc(3)Man(9)GlcNAc(2) oligosaccharide precursor. Required for the accumulation of seed storage proteins, the formation of protein bodies, cell differentiation, cellulose biosynthesis and organization (in cell walls), cell shape determination and organization (e.g. epidermal cells), and embryo development. Involved in root development. This Arabidopsis thaliana (Mouse-ear cress) protein is Mannosyl-oligosaccharide glucosidase GCS1 (GCS1).